The following is a 309-amino-acid chain: Gamma-hemolysin component A (309 aa).

The N-terminal stretch at Met-1–Ala-29 is a signal peptide.

Belongs to the aerolysin family. As to quaternary structure, toxicity requires sequential binding and synergistic association of a class S and a class F component which form heterooligomeric complexes. HlgA (class S) associates with HlgB (class F) thus forming an AB toxin in strains producing both gamma-hemolysins and leukocidins. HlgA and LukF-PV can also form a complex.

The protein resides in the secreted. Toxin that seems to act by forming pores in the membrane of the cell. Has a hemolytic and a leucotoxic activity. The polypeptide is Gamma-hemolysin component A (hlgA) (Staphylococcus aureus (strain COL)).